The chain runs to 78 residues: Bowman-Birk type proteinase inhibitors I-A, I-B, and I-A' (78 aa).

7 disulfide bridges follow: C18/C72, C19/C34, C22/C68, C24/C32, C42/C49, C46/C61, and C51/C59.

Belongs to the Bowman-Birk serine protease inhibitor family.

In terms of biological role, these inhibitors strongly inhibit trypsin. The chain is Bowman-Birk type proteinase inhibitors I-A, I-B, and I-A' from Phaseolus angularis (Azuki bean).